Here is a 188-residue protein sequence, read N- to C-terminus: MKKIGVLAIQGAVDEHIQMIESAGALAFKVKHSNDLAGLDGLVLPGGESTTMRKIMKRYDLMEPVKAFASKGKAIFGTCAGLVLLSKEIEGGEESLGLIEATAIRNGFGRQKESFEAELNVEAFGEPAFEAIFIRAPYLIEPSNEVAVLATVENRIVAAKQANILVTAFHPELTNDNRWMNYFLEKMV.

47 to 49 (GES) is a binding site for L-glutamine. The active-site Nucleophile is Cys79. L-glutamine contacts are provided by residues Arg105 and 134 to 135 (IR). Residues His170 and Glu172 each act as charge relay system in the active site.

Belongs to the glutaminase PdxT/SNO family. In the presence of PdxS, forms a dodecamer of heterodimers. Only shows activity in the heterodimer.

The catalysed reaction is aldehydo-D-ribose 5-phosphate + D-glyceraldehyde 3-phosphate + L-glutamine = pyridoxal 5'-phosphate + L-glutamate + phosphate + 3 H2O + H(+). It catalyses the reaction L-glutamine + H2O = L-glutamate + NH4(+). Its pathway is cofactor biosynthesis; pyridoxal 5'-phosphate biosynthesis. Catalyzes the hydrolysis of glutamine to glutamate and ammonia as part of the biosynthesis of pyridoxal 5'-phosphate. The resulting ammonia molecule is channeled to the active site of PdxS. This is Pyridoxal 5'-phosphate synthase subunit PdxT from Listeria monocytogenes serovar 1/2a (strain ATCC BAA-679 / EGD-e).